A 457-amino-acid chain; its full sequence is Protein translocase subunit SecY (457 aa).

Residues 1 to 20 lie on the Cytoplasmic side of the membrane; the sequence is MGVIDVLAAVGERFPAVRKP. The helical transmembrane segment at 21–47 threads the bilayer; sequence ERKPTLYRRLAWTGVILVLYFIMSNIP. Topologically, residues 48 to 59 are extracellular; that stretch reads LYGIPPQNIGGQ. Positions 60–67 form an intramembrane region, helical; that stretch reads VDLQRIIF. A discontinuously helical transmembrane segment spans residues 60–88; the sequence is VDLQRIIFASSAGTLMELGIGPIVTASLI. The stretch at 68-79 is an intramembrane region; sequence ASSAGTLMELGI. An intramembrane region (helical) is located at residues 80–88; the sequence is GPIVTASLI. At 89–109 the chain is on the cytoplasmic side; it reads IQVLVGAKIIKLDLADPEGRR. Residues 110 to 134 traverse the membrane as a helical segment; sequence KFTSAQKVLALAFAALEAVAFTVGG. The Extracellular portion of the chain corresponds to 135–146; it reads RYWVGTAIEPGP. Residues 147–171 traverse the membrane as a helical segment; the sequence is LDYALVSLQLFLGALLVIYFDEVMQ. Topologically, residues 172-178 are cytoplasmic; it reads KGWGIGS. A helical transmembrane segment spans residues 179 to 197; sequence AISLFILAGVAQGVVWSIF. At 198-229 the chain is on the extracellular side; that stretch reads GTIPGVAQDYGLVPAIISNPDLTLLARPNGFP. The helical transmembrane segment at 230–251 threads the bilayer; that stretch reads DLTGFFTTLAAIILLVYLQAMR. The Cytoplasmic portion of the chain corresponds to 252 to 276; it reads VEIPITSERFKGIRSRVPLQFIYVT. Residues 277–298 traverse the membrane as a helical segment; it reads NIPILLVGILVSDLLLVQRLLA. The Extracellular portion of the chain corresponds to 299-332; it reads DYLGVESRAYQIYSSIVYYLSPPRGVVQSIADPV. A helical membrane pass occupies residues 333–352; the sequence is KTAVFIASWTVLSIVFGYMW. Topologically, residues 353–395 are cytoplasmic; the sequence is VEIAGLNPREQAERLIKGGLAIPGMRSDPRVLERVLRRYIYPL. The chain crosses the membrane as a helical span at residues 396–414; that stretch reads TFLSSLIVAALVIVADIFG. Topologically, residues 415–417 are extracellular; that stretch reads AYG. The chain crosses the membrane as a helical span at residues 418–432; it reads TGTGLLLAVGIINQY. Topologically, residues 433 to 457 are cytoplasmic; it reads YAMITRERALETYPLLRRILGEEVV.

The protein belongs to the SecY/SEC61-alpha family. Component of the Sec protein translocase complex. Heterotrimer consisting of alpha (SecY), beta (SecG) and gamma (SecE) subunits. The heterotrimers can form oligomers, although 1 heterotrimer is thought to be able to translocate proteins. Interacts with the ribosome. May interact with SecDF, and other proteins may be involved.

It localises to the cell membrane. Functionally, the central subunit of the protein translocation channel SecYEG. Consists of two halves formed by TMs 1-5 and 6-10. These two domains form a lateral gate at the front which open onto the bilayer between TMs 2 and 7, and are clamped together by SecE at the back. The channel is closed by both a pore ring composed of hydrophobic SecY resides and a short helix (helix 2A) on the extracellular side of the membrane which forms a plug. The plug probably moves laterally to allow the channel to open. The ring and the pore may move independently. The sequence is that of Protein translocase subunit SecY from Aeropyrum pernix (strain ATCC 700893 / DSM 11879 / JCM 9820 / NBRC 100138 / K1).